The sequence spans 371 residues: Phosphatase IMPL1, chloroplastic (371 aa).

A chloroplast-targeting transit peptide spans 1–60 (MGRSLIFSGNMSLRISHLPRSSLPLQNPISGRTVNRTFRYRCTRILSNSFKSTTRLQTKA). Val61 carries the N-acetylvaline modification. Positions 148, 165, 167, and 168 each coordinate Mg(2+). Glu148 provides a ligand contact to substrate. Residues 167–170 (LDGT), 273–275 (GAA), Glu292, and Asp299 each bind substrate. Asp299 is a binding site for Mg(2+).

It belongs to the inositol monophosphatase superfamily. It depends on Mg(2+) as a cofactor. Ubiquitous. Expressed in pistil and seed endosperm.

The protein localises to the plastid. It is found in the chloroplast stroma. It catalyses the reaction a myo-inositol phosphate + H2O = myo-inositol + phosphate. It functions in the pathway polyol metabolism; myo-inositol biosynthesis; myo-inositol from D-glucose 6-phosphate: step 2/2. Phosphatase acting preferentially on D-myoinositol 1-phosphate (D-Ins 1-P). The protein is Phosphatase IMPL1, chloroplastic (IMPL1) of Arabidopsis thaliana (Mouse-ear cress).